We begin with the raw amino-acid sequence, 303 residues long: Paired immunoglobulin-like type 2 receptor alpha (303 aa).

The first 19 residues, 1–19 (MGRPLLLPLLPLLLPPAFL), serve as a signal peptide directing secretion. The Extracellular segment spans residues 20-197 (QPSGSTGSGP…DSWHISLETA (178 aa)). In terms of domain architecture, Ig-like V-type spans 32–150 (LYGVTQPKHL…SIEGTKLSIT (119 aa)). Asn-100 carries N-linked (GlcNAc...) asparagine glycosylation. A helical membrane pass occupies residues 198–218 (VGVAVAVTVLGIMILGLICLL). Topologically, residues 219 to 303 (RWRRRKGQQR…NETLYSVLKA (85 aa)) are cytoplasmic. Residues 226–296 (QQRTKATTPA…RPLKSPQNET (71 aa)) form a disordered region. Short sequence motifs (ITIM motif) lie at residues 267 to 272 (IVYASL) and 296 to 301 (TLYSVL).

Monomer. Interacts with PTPN6/SHP-1 and PTPN11/SHP-2 upon tyrosine phosphorylation. As to quaternary structure, (Microbial infection) Interacts with herpes simplex virus 1 glycoprotein B. According to PubMed:10660620, N- and O-glycosylated. According to PubMed:10903717, only N-glycosylated. Post-translationally, phosphorylated on tyrosine residues. In terms of tissue distribution, predominantly detected in hemopoietic tissues and is expressed by monocytes, macrophages, and granulocytes, but not by lymphocytes. Also strongly expressed by dendritic cells (DC); preferentially by CD14+/CD1a- DC derived from CD34+ progenitors. Also expressed by CD11c+ blood and tonsil DC, but not by CD11c- DC precursors.

Its subcellular location is the cell membrane. It is found in the secreted. Paired receptors consist of highly related activating and inhibitory receptors and are widely involved in the regulation of the immune system. PILRA is thought to act as a cellular signaling inhibitory receptor by recruiting cytoplasmic phosphatases like PTPN6/SHP-1 and PTPN11/SHP-2 via their SH2 domains that block signal transduction through dephosphorylation of signaling molecules. Receptor for PIANP. In terms of biological role, (Microbial infection) Acts as an entry co-receptor for herpes simplex virus 1. In Homo sapiens (Human), this protein is Paired immunoglobulin-like type 2 receptor alpha (PILRA).